The sequence spans 120 residues: Cell cycle protein GpsB (120 aa).

Residues 32-68 (LDDIIKDYETYAALVKELREENRRLKEELAAKPVEKA) adopt a coiled-coil conformation. The segment at 63–88 (KPVEKAPVQPTQPVQSTQATQSTVES) is disordered. Residues 68–86 (APVQPTQPVQSTQATQSTV) are compositionally biased toward low complexity.

This sequence belongs to the GpsB family. In terms of assembly, forms polymers through the coiled coil domains. Interacts with PBP1, MreC and EzrA.

The protein localises to the cytoplasm. Its function is as follows. Divisome component that associates with the complex late in its assembly, after the Z-ring is formed, and is dependent on DivIC and PBP2B for its recruitment to the divisome. Together with EzrA, is a key component of the system that regulates PBP1 localization during cell cycle progression. Its main role could be the removal of PBP1 from the cell pole after pole maturation is completed. Also contributes to the recruitment of PBP1 to the division complex. Not essential for septum formation. This chain is Cell cycle protein GpsB, found in Streptococcus sanguinis (strain SK36).